We begin with the raw amino-acid sequence, 434 residues long: Anaerobic glycerol-3-phosphate dehydrogenase subunit B (434 aa).

It belongs to the anaerobic G-3-P dehydrogenase subunit B family. Composed of a catalytic GlpA/B dimer and of membrane bound GlpC. Requires FMN as cofactor.

It carries out the reaction a quinone + sn-glycerol 3-phosphate = dihydroxyacetone phosphate + a quinol. It participates in polyol metabolism; glycerol degradation via glycerol kinase pathway; glycerone phosphate from sn-glycerol 3-phosphate (anaerobic route): step 1/1. Functionally, conversion of glycerol 3-phosphate to dihydroxyacetone. Uses fumarate or nitrate as electron acceptor. The polypeptide is Anaerobic glycerol-3-phosphate dehydrogenase subunit B (Histophilus somni (strain 2336) (Haemophilus somnus)).